The chain runs to 439 residues: Xylose isomerase (439 aa).

Residues H101 and D104 contribute to the active site. The Mg(2+) site is built by E232, E268, H271, D296, D307, D309, and D339.

This sequence belongs to the xylose isomerase family. In terms of assembly, homotetramer. Requires Mg(2+) as cofactor.

The protein localises to the cytoplasm. It catalyses the reaction alpha-D-xylose = alpha-D-xylulofuranose. In Haemophilus influenzae (strain PittEE), this protein is Xylose isomerase.